Consider the following 416-residue polypeptide: Na(+)/H(+) antiporter NhaA (416 aa).

The next 11 membrane-spanning stretches (helical) occupy residues 39–59, 82–102, 119–139, 146–166, 175–195, 198–218, 234–254, 281–301, 315–335, 353–373, and 390–410; these read GIVL…PWAA, LHFW…GLEI, LPVL…LALV, GWAV…ALLG, VFLL…IALF, GGLQ…VLLL, AVLW…GVVL, PWVT…VALG, LLMA…VLLA, WGGL…AIFI, and GVLL…WWLQ.

It belongs to the NhaA Na(+)/H(+) (TC 2.A.33) antiporter family.

It localises to the cell inner membrane. The catalysed reaction is Na(+)(in) + 2 H(+)(out) = Na(+)(out) + 2 H(+)(in). In terms of biological role, na(+)/H(+) antiporter that extrudes sodium in exchange for external protons. This is Na(+)/H(+) antiporter NhaA from Acidovorax sp. (strain JS42).